The chain runs to 35 residues: Mu-theraphotoxin-Pn3b (35 aa).

3 cysteine pairs are disulfide-bonded: C2–C16, C9–C21, and C15–C28.

Belongs to the neurotoxin 10 (Hwtx-1) family. 28 (Jztx-11) subfamily. Expressed by the venom gland.

Its subcellular location is the secreted. In terms of biological role, gating-modifier toxin that targets voltage-gated sodium channels with a preferential activity on Nav1.7/SCN9A. On Nav1.7/SCN9A, the toxin acts by shifting the voltage-dependence of activation to more depolarized potentials, whereas it does not cause significant effect on the voltage-dependence of activation on other sodium channels. Minor effects are observed on the voltage-dependence of steady-state fast inactivation for all sodium channels tested (Nav1.1/SCN1A-Nav1.8/SCN10A). By testing the toxin on channel chimera, it has been shown to interact with the S3-S4 linkers in DII and DIV domains of Nav1.7/SCN9A. In vivo, the toxin dose-dependently reduces OD1-induced spontaneous pain behaviors. The chain is Mu-theraphotoxin-Pn3b from Pamphobeteus nigricolor (Giant blue bloom tarantula).